Here is a 207-residue protein sequence, read N- to C-terminus: Adenylyl-sulfate kinase (207 aa).

34–41 contributes to the ATP binding site; sequence GLSGSGKS. S108 functions as the Phosphoserine intermediate in the catalytic mechanism.

The protein belongs to the APS kinase family.

It catalyses the reaction adenosine 5'-phosphosulfate + ATP = 3'-phosphoadenylyl sulfate + ADP + H(+). The protein operates within sulfur metabolism; hydrogen sulfide biosynthesis; sulfite from sulfate: step 2/3. In terms of biological role, catalyzes the synthesis of activated sulfate. The sequence is that of Adenylyl-sulfate kinase from Lactiplantibacillus plantarum (strain ATCC BAA-793 / NCIMB 8826 / WCFS1) (Lactobacillus plantarum).